Reading from the N-terminus, the 137-residue chain is Small ribosomal subunit protein uS9 (137 aa).

The interval 105-137 (LKTEGYLKRDPRAVERKKYGLRKARKAPQYSKR) is disordered. Basic and acidic residues predominate over residues 109-122 (GYLKRDPRAVERKK). Basic residues predominate over residues 123–137 (YGLRKARKAPQYSKR).

This sequence belongs to the universal ribosomal protein uS9 family.

In Synechococcus sp. (strain JA-3-3Ab) (Cyanobacteria bacterium Yellowstone A-Prime), this protein is Small ribosomal subunit protein uS9.